A 470-amino-acid chain; its full sequence is Probable glycosyltransferase At3g07620 (470 aa).

Residues Met-1 to Lys-7 lie on the Cytoplasmic side of the membrane. The chain crosses the membrane as a helical; Signal-anchor span at residues Tyr-8–Ala-28. The Lumenal segment spans residues Lys-29 to Leu-470. 6 N-linked (GlcNAc...) asparagine glycosylation sites follow: Asn-32, Asn-73, Asn-105, Asn-236, Asn-274, and Asn-299.

It belongs to the glycosyltransferase 47 family.

The protein localises to the golgi apparatus membrane. Its function is as follows. May be involved in cell wall biosynthesis. This Arabidopsis thaliana (Mouse-ear cress) protein is Probable glycosyltransferase At3g07620.